The sequence spans 313 residues: S-methyl-5'-thioadenosine phosphorylase (313 aa).

Phosphate contacts are provided by residues T20, R68–H69, and S101–A102. M203 contacts substrate. S204 is a phosphate binding site. D227–D229 is a substrate binding site.

This sequence belongs to the PNP/MTAP phosphorylase family. MTAP subfamily. As to quaternary structure, homotrimer.

The protein resides in the cytoplasm. It is found in the nucleus. The catalysed reaction is S-methyl-5'-thioadenosine + phosphate = 5-(methylsulfanyl)-alpha-D-ribose 1-phosphate + adenine. Its pathway is amino-acid biosynthesis; L-methionine biosynthesis via salvage pathway; S-methyl-5-thio-alpha-D-ribose 1-phosphate from S-methyl-5'-thioadenosine (phosphorylase route): step 1/1. Its function is as follows. Catalyzes the reversible phosphorylation of S-methyl-5'-thioadenosine (MTA) to adenine and 5-methylthioribose-1-phosphate. Involved in the breakdown of MTA, a major by-product of polyamine biosynthesis. Responsible for the first step in the methionine salvage pathway after MTA has been generated from S-adenosylmethionine. Has broad substrate specificity with 6-aminopurine nucleosides as preferred substrates. This chain is S-methyl-5'-thioadenosine phosphorylase, found in Ajellomyces capsulatus (strain G186AR / H82 / ATCC MYA-2454 / RMSCC 2432) (Darling's disease fungus).